The following is a 395-amino-acid chain: ATP phosphoribosyltransferase regulatory subunit (395 aa).

Belongs to the class-II aminoacyl-tRNA synthetase family. HisZ subfamily. As to quaternary structure, heteromultimer composed of HisG and HisZ subunits.

It localises to the cytoplasm. The protein operates within amino-acid biosynthesis; L-histidine biosynthesis; L-histidine from 5-phospho-alpha-D-ribose 1-diphosphate: step 1/9. Required for the first step of histidine biosynthesis. May allow the feedback regulation of ATP phosphoribosyltransferase activity by histidine. This is ATP phosphoribosyltransferase regulatory subunit from Pseudomonas fluorescens (strain Pf0-1).